The chain runs to 697 residues: Potassium-transporting ATPase ATP-binding subunit (697 aa).

A run of 4 helical transmembrane segments spans residues 55–75 (PIMFVVEIGFIITFILSFLPS), 79–99 (SIPGWFNITVSLILLFTVLFA), 245–265 (LTLIFLIVVVTLPIFTNYLGF), and 271–291 (VLVALLVCLIPTTIGGLLSAI). Asp-324 (4-aspartylphosphate intermediate) is an active-site residue. ATP-binding positions include Asp-361, Glu-365, 393–400 (FKAETRMS), and Lys-412. Mg(2+) is bound by residues Asp-535 and Asp-539. The next 3 membrane-spanning stretches (helical) occupy residues 605–625 (FAIIPAMFTLAIPQMEALNIM), 633–653 (AILSALIFNAVIIPLLIPLAM), and 677–697 (GGVIVPFIGIKVIDIIVGLFI).

It belongs to the cation transport ATPase (P-type) (TC 3.A.3) family. Type IA subfamily. In terms of assembly, the system is composed of three essential subunits: KdpA, KdpB and KdpC.

It is found in the cell membrane. The enzyme catalyses K(+)(out) + ATP + H2O = K(+)(in) + ADP + phosphate + H(+). Part of the high-affinity ATP-driven potassium transport (or Kdp) system, which catalyzes the hydrolysis of ATP coupled with the electrogenic transport of potassium into the cytoplasm. This subunit is responsible for energy coupling to the transport system and for the release of the potassium ions to the cytoplasm. The polypeptide is Potassium-transporting ATPase ATP-binding subunit (Bacillus cereus (strain G9842)).